Here is a 336-residue protein sequence, read N- to C-terminus: 4-hydroxy-3-methylbut-2-enyl diphosphate reductase (336 aa).

A [4Fe-4S] cluster-binding site is contributed by C37. Residues H66 and H99 each coordinate (2E)-4-hydroxy-3-methylbut-2-enyl diphosphate. Residues H66 and H99 each contribute to the dimethylallyl diphosphate site. 2 residues coordinate isopentenyl diphosphate: H66 and H99. C121 is a [4Fe-4S] cluster binding site. A (2E)-4-hydroxy-3-methylbut-2-enyl diphosphate-binding site is contributed by H149. H149 contacts dimethylallyl diphosphate. H149 contributes to the isopentenyl diphosphate binding site. Residue E151 is the Proton donor of the active site. T189 is a binding site for (2E)-4-hydroxy-3-methylbut-2-enyl diphosphate. [4Fe-4S] cluster is bound at residue C219. 4 residues coordinate (2E)-4-hydroxy-3-methylbut-2-enyl diphosphate: S247, S248, N249, and S292. Residues S247, S248, N249, and S292 each contribute to the dimethylallyl diphosphate site. Isopentenyl diphosphate is bound by residues S247, S248, N249, and S292.

Belongs to the IspH family. The cofactor is [4Fe-4S] cluster.

The catalysed reaction is isopentenyl diphosphate + 2 oxidized [2Fe-2S]-[ferredoxin] + H2O = (2E)-4-hydroxy-3-methylbut-2-enyl diphosphate + 2 reduced [2Fe-2S]-[ferredoxin] + 2 H(+). It catalyses the reaction dimethylallyl diphosphate + 2 oxidized [2Fe-2S]-[ferredoxin] + H2O = (2E)-4-hydroxy-3-methylbut-2-enyl diphosphate + 2 reduced [2Fe-2S]-[ferredoxin] + 2 H(+). The protein operates within isoprenoid biosynthesis; dimethylallyl diphosphate biosynthesis; dimethylallyl diphosphate from (2E)-4-hydroxy-3-methylbutenyl diphosphate: step 1/1. It functions in the pathway isoprenoid biosynthesis; isopentenyl diphosphate biosynthesis via DXP pathway; isopentenyl diphosphate from 1-deoxy-D-xylulose 5-phosphate: step 6/6. Catalyzes the conversion of 1-hydroxy-2-methyl-2-(E)-butenyl 4-diphosphate (HMBPP) into a mixture of isopentenyl diphosphate (IPP) and dimethylallyl diphosphate (DMAPP). Acts in the terminal step of the DOXP/MEP pathway for isoprenoid precursor biosynthesis. The chain is 4-hydroxy-3-methylbut-2-enyl diphosphate reductase from Rhodococcus opacus (strain B4).